The chain runs to 149 residues: UPF0260 protein PSEEN4031 (149 aa).

It belongs to the UPF0260 family.

The protein is UPF0260 protein PSEEN4031 of Pseudomonas entomophila (strain L48).